The sequence spans 138 residues: Small ribosomal subunit protein uS11 (138 aa).

Low complexity predominate over residues 1–12 (MPPAKKAAAAPK). Residues 1–27 (MPPAKKAAAAPKKGQKTRRREKKNVPH) are disordered. Basic residues predominate over residues 13 to 22 (KGQKTRRREK).

The protein belongs to the universal ribosomal protein uS11 family. As to quaternary structure, part of the 30S ribosomal subunit. Interacts with proteins S7 and S18. Binds to IF-3.

Located on the platform of the 30S subunit, it bridges several disparate RNA helices of the 16S rRNA. Forms part of the Shine-Dalgarno cleft in the 70S ribosome. The chain is Small ribosomal subunit protein uS11 from Mycolicibacterium paratuberculosis (strain ATCC BAA-968 / K-10) (Mycobacterium paratuberculosis).